We begin with the raw amino-acid sequence, 222 residues long: uncharacterized protein (222 aa).

This sequence belongs to the ycf73 family.

The protein resides in the plastid. Its subcellular location is the chloroplast. This is an uncharacterized protein from Oryza nivara (Indian wild rice).